Reading from the N-terminus, the 294-residue chain is tRNA dimethylallyltransferase (294 aa).

ATP is bound at residue 10 to 17 (GITASGKS). 12-17 (TASGKS) provides a ligand contact to substrate. The interval 36–39 (DSKQ) is interaction with substrate tRNA.

The protein belongs to the IPP transferase family. As to quaternary structure, monomer. It depends on Mg(2+) as a cofactor.

The catalysed reaction is adenosine(37) in tRNA + dimethylallyl diphosphate = N(6)-dimethylallyladenosine(37) in tRNA + diphosphate. In terms of biological role, catalyzes the transfer of a dimethylallyl group onto the adenine at position 37 in tRNAs that read codons beginning with uridine, leading to the formation of N6-(dimethylallyl)adenosine (i(6)A). This is tRNA dimethylallyltransferase from Wolbachia sp. subsp. Drosophila simulans (strain wRi).